The following is a 72-amino-acid chain: Small, acid-soluble spore protein 1 (72 aa).

The protein belongs to the alpha/beta-type SASP family.

SASP are bound to spore DNA. They are double-stranded DNA-binding proteins that cause DNA to change to an a-like conformation. They protect the DNA backbone from chemical and enzymatic cleavage and are thus involved in dormant spore's high resistance to UV light. The chain is Small, acid-soluble spore protein 1 (Sh-1) from Halobacillus halophilus (strain ATCC 35676 / DSM 2266 / JCM 20832 / KCTC 3685 / LMG 17431 / NBRC 102448 / NCIMB 2269) (Sporosarcina halophila).